The following is a 154-amino-acid chain: Myoglobin (154 aa).

The region spanning 2-148 (GLSDGEWQLV…FRNDMAAKYK (147 aa)) is the Globin domain. A Phosphoserine modification is found at Ser-4. His-65 contributes to the nitrite binding site. His-65 is an O2 binding site. The residue at position 68 (Thr-68) is a Phosphothreonine. His-94 is a binding site for heme b.

Belongs to the globin family. As to quaternary structure, monomeric.

It is found in the cytoplasm. The protein localises to the sarcoplasm. It carries out the reaction Fe(III)-heme b-[protein] + nitric oxide + H2O = Fe(II)-heme b-[protein] + nitrite + 2 H(+). The catalysed reaction is H2O2 + AH2 = A + 2 H2O. Functionally, monomeric heme protein which primary function is to store oxygen and facilitate its diffusion within muscle tissues. Reversibly binds oxygen through a pentacoordinated heme iron and enables its timely and efficient release as needed during periods of heightened demand. Depending on the oxidative conditions of tissues and cells, and in addition to its ability to bind oxygen, it also has a nitrite reductase activity whereby it regulates the production of bioactive nitric oxide. Under stress conditions, like hypoxia and anoxia, it also protects cells against reactive oxygen species thanks to its pseudoperoxidase activity. The polypeptide is Myoglobin (MB) (Saimiri sciureus (Common squirrel monkey)).